Here is a 553-residue protein sequence, read N- to C-terminus: Phospholipase B (553 aa).

The signal sequence occupies residues 1–35 (MIRFGNPSSSDKRRQRCRSWYWGGLLLLWAVAETR). Asparagine 313, asparagine 416, and asparagine 531 each carry an N-linked (GlcNAc...) asparagine glycan.

The protein belongs to the phospholipase B-like family. In terms of tissue distribution, expressed by the venom gland.

It localises to the secreted. Functionally, may cause hemolysis or may be involved in protein folding and translation. The chain is Phospholipase B from Crotalus adamanteus (Eastern diamondback rattlesnake).